We begin with the raw amino-acid sequence, 646 residues long: Amyloid beta A4 precursor protein-binding family B member 1-interacting protein (646 aa).

Positions 82–141 (FATERDTSKGSVPVAPAPSKPQSNFSLPASFDSSKPATSSNSIAAPPPPPAFKPSKEEEE) are disordered. The span at 101–116 (KPQSNFSLPASFDSSK) shows a compositional bias: polar residues. The 87-residue stretch at 162–248 (KKLVVKVEIT…NKVLFQEKKH (87 aa)) folds into the Ras-associating domain. The PH domain occupies 292-401 (VPDLEGVLYL…WVTGIRVAKY (110 aa)). Residues 420–646 (ASWANRTIQA…NAMQKKRTQP (227 aa)) form a disordered region. Residues 429–445 (ASSTASTPSPTPKAKAA) show a composition bias toward low complexity. Pro residues-rich tracts occupy residues 465-500 (LPPPPPSMDFLPPPPPDPMFPPPPPAPPAPPAPPVP), 509-536 (FPPPPKFPQSSFPPPPMDDLPPPPPPPE), 560-577 (LPPPPPDPVASLPPPPPA), and 584-598 (APPPPPPPPPPPAPA).

It belongs to the MRL family.

The protein resides in the cell membrane. Its subcellular location is the cytoplasm. It localises to the cytoskeleton. Functionally, appears to function in the signal transduction from Ras activation to actin cytoskeletal remodeling. The chain is Amyloid beta A4 precursor protein-binding family B member 1-interacting protein (apbb1ip) from Danio rerio (Zebrafish).